A 999-amino-acid polypeptide reads, in one-letter code: uncharacterized protein (999 aa).

Residues 45–128 (NSNNIGNGNG…TPTITPSSPS (84 aa)) are compositionally biased toward low complexity. Positions 45-129 (NSNNIGNGNG…PTITPSSPSV (85 aa)) are disordered. Residues 723–767 (YQQSQQQQSQQQQQQQQQQQQQQQQQQQQQQQQQQQQQQQQQQQQ) are a coiled coil. Positions 873 to 887 (NDINNANNSNNNNNN) are enriched in low complexity. Residues 873–904 (NDINNANNSNNNNNNQSQVLLSPNRNKDGTLN) are disordered. A helical transmembrane segment spans residues 976-996 (LFSLVLILAFIWFFFEIYFFF).

It localises to the membrane. This is an uncharacterized protein from Dictyostelium discoideum (Social amoeba).